The following is a 301-amino-acid chain: Thymidylate synthase (301 aa).

DUMP contacts are provided by residues R38 and 163-164 (RR). C183 functions as the Nucleophile in the catalytic mechanism. Residues 203-206 (RSGD), N214, and 244-246 (HIY) each bind dUMP. D206 lines the (6R)-5,10-methylene-5,6,7,8-tetrahydrofolate pocket. Residue A300 participates in (6R)-5,10-methylene-5,6,7,8-tetrahydrofolate binding.

The protein belongs to the thymidylate synthase family. Homodimer.

It carries out the reaction dUMP + (6R)-5,10-methylene-5,6,7,8-tetrahydrofolate = 7,8-dihydrofolate + dTMP. The protein operates within pyrimidine metabolism; dTTP biosynthesis. Catalyzes the reductive methylation of deoxyuridylate to thymidylate. This is Thymidylate synthase from Varicella-zoster virus (strain Dumas) (HHV-3).